The sequence spans 638 residues: MVVSADPLSSERAEMNILEINQELRSQLAESNQQFRDLKEKFLITQATAYSLANQLKKYKCEEYKDIIDSVLRDELQSMEKLAEKLRQAEELRQYKALVHSQAKELTQLREKLREGRDASRWLNKHLKTLLTPDDPDKSQGQDLREQLAEGHRLAEHLVHKLSPENDEDEDEDEDDKDEEVEKVQESPAPREVQKTEEKEVPQDSLEECAVTCSNSHNPSNSNQPHRSTKITFKEHEVDSALVVESEHPHDEEEEALNIPPENQNDHEEEEGKAPVPPRHHDKSNSYRHREVSFLALDEQKVCSAQDVARDYSNPKWDETSLGFLEKQSDLEEVKGQETVAPRLSRGPLRVDKHEIPQESLDGCCLTPSILPDLTPSYHPYWSTLYSFEDKQVSLALVDKIKKDQEEIEDQSPPCPRLSQELPEVKEQEVPEDSVNEVYLTPSVHHDVSDCHQPYSSTLSSLEDQLACSALDVASPTEAACPQGTWSGDLSHHQSEVQVSQAQLEPSTLVPSCLRLQLDQGFHCGNGLAQRGLSSTTCSFSANADSGNQWPFQELVLEPSLGMKNPPQLEDDALEGSASNTQGRQVTGRIRASLVLILKTIRRRLPFSKWRLAFRFAGPHAESAEIPNTAGRTQRMAG.

2 coiled-coil regions span residues 10 to 43 and 69 to 115; these read SERA…EKFL and DSVL…KLRE. Residues 157 to 285 are disordered; it reads HLVHKLSPEN…VPPRHHDKSN (129 aa). Residues 165–179 are compositionally biased toward acidic residues; the sequence is ENDEDEDEDEDDKDE. One can recognise an Olduvai 1 domain in the interval 174–261; that stretch reads EDDKDEEVEK…EEEEALNIPP (88 aa). A compositionally biased stretch (basic and acidic residues) spans 192–202; the sequence is EVQKTEEKEVP. A compositionally biased stretch (low complexity) spans 214–226; that stretch reads SNSHNPSNSNQPH. 2 stretches are compositionally biased toward basic and acidic residues: residues 232–251 and 264–273; these read TFKE…HPHD and QNDHEEEEGK. 2 consecutive Olduvai domains span residues 326–399 and 400–503; these read EKQS…ALVD and KIKK…SQAQ. The disordered stretch occupies residues 562–584; it reads GMKNPPQLEDDALEGSASNTQGR.

It belongs to the NBPF family. As to expression, expressed in testis.

It is found in the cytoplasm. This is NBPF family member NBPF4 from Homo sapiens (Human).